The chain runs to 134 residues: ATP synthase epsilon chain (134 aa).

Belongs to the ATPase epsilon chain family. As to quaternary structure, F-type ATPases have 2 components, CF(1) - the catalytic core - and CF(0) - the membrane proton channel. CF(1) has five subunits: alpha(3), beta(3), gamma(1), delta(1), epsilon(1). CF(0) has three main subunits: a, b and c.

The protein resides in the cellular thylakoid membrane. Produces ATP from ADP in the presence of a proton gradient across the membrane. The sequence is that of ATP synthase epsilon chain from Prochlorococcus marinus (strain MIT 9215).